Consider the following 388-residue polypeptide: Succinate--CoA ligase [ADP-forming] subunit beta (388 aa).

The region spanning 9–244 is the ATP-grasp domain; that stretch reads KSLFAEYGLP…PSQDDAREAH (236 aa). ATP is bound by residues K46, 53 to 55, E99, T102, and E107; that span reads GRG. Positions 199 and 213 each coordinate Mg(2+). Substrate contacts are provided by residues N264 and 321 to 323; that span reads GIV.

Belongs to the succinate/malate CoA ligase beta subunit family. Heterotetramer of two alpha and two beta subunits. Requires Mg(2+) as cofactor.

It catalyses the reaction succinate + ATP + CoA = succinyl-CoA + ADP + phosphate. The catalysed reaction is GTP + succinate + CoA = succinyl-CoA + GDP + phosphate. The protein operates within carbohydrate metabolism; tricarboxylic acid cycle; succinate from succinyl-CoA (ligase route): step 1/1. In terms of biological role, succinyl-CoA synthetase functions in the citric acid cycle (TCA), coupling the hydrolysis of succinyl-CoA to the synthesis of either ATP or GTP and thus represents the only step of substrate-level phosphorylation in the TCA. The beta subunit provides nucleotide specificity of the enzyme and binds the substrate succinate, while the binding sites for coenzyme A and phosphate are found in the alpha subunit. This Shewanella sp. (strain MR-4) protein is Succinate--CoA ligase [ADP-forming] subunit beta.